The chain runs to 870 residues: DNA polymerase kappa (870 aa).

The UmuC domain maps to 103-358 (IVHIDMDAFY…LPIRKVSGIG (256 aa)). Mg(2+)-binding residues include aspartate 107, aspartate 198, and glutamate 199. 2 consecutive UBZ4-type zinc fingers follow at residues 621–651 (ILTCPVCFRAQGCISLEALNKHVDECLDGPS) and 776–806 (ALVCPVCNVEQKTSDLTLFNVHVDVCLNKSF). Residues cysteine 624, cysteine 627, histidine 642, cysteine 646, cysteine 779, cysteine 782, histidine 797, and cysteine 801 each coordinate Zn(2+). A disordered region spans residues 816–858 (NPVNQPKESSRSTGSSSGVQKAVTRTKRPGLMTKYSTSKKIKP).

The protein belongs to the DNA polymerase type-Y family. Interacts with REV1. Interacts with PCNA. The cofactor is Mg(2+). Requires Mn(2+) as cofactor. As to expression, detected at low levels in testis, spleen, prostate and ovary. Detected at very low levels in kidney, colon, brain, heart, liver, lung, placenta, pancreas and peripheral blood leukocytes.

It is found in the nucleus. The enzyme catalyses DNA(n) + a 2'-deoxyribonucleoside 5'-triphosphate = DNA(n+1) + diphosphate. Functionally, DNA polymerase specifically involved in DNA repair. Plays an important role in translesion synthesis, where the normal high-fidelity DNA polymerases cannot proceed and DNA synthesis stalls. Depending on the context, it inserts the correct base, but causes frequent base transitions, transversions and frameshifts. Lacks 3'-5' proofreading exonuclease activity. Forms a Schiff base with 5'-deoxyribose phosphate at abasic sites, but does not have lyase activity. The sequence is that of DNA polymerase kappa (POLK) from Homo sapiens (Human).